Here is a 425-residue protein sequence, read N- to C-terminus: Tyrosine--tRNA ligase (425 aa).

Tyrosine 33 contributes to the L-tyrosine binding site. Positions 38–47 match the 'HIGH' region motif; that stretch reads PTADSLHLGN. The L-tyrosine site is built by tyrosine 170 and glutamine 174. The short motif at 230–234 is the 'KMSKS' region element; it reads KFGKS. Residue lysine 233 participates in ATP binding. The S4 RNA-binding domain occupies 356-422; the sequence is KKLIDLLVET…GKKNKMIIRL (67 aa).

It belongs to the class-I aminoacyl-tRNA synthetase family. TyrS type 1 subfamily. In terms of assembly, homodimer.

Its subcellular location is the cytoplasm. The catalysed reaction is tRNA(Tyr) + L-tyrosine + ATP = L-tyrosyl-tRNA(Tyr) + AMP + diphosphate + H(+). Functionally, catalyzes the attachment of tyrosine to tRNA(Tyr) in a two-step reaction: tyrosine is first activated by ATP to form Tyr-AMP and then transferred to the acceptor end of tRNA(Tyr). The polypeptide is Tyrosine--tRNA ligase (Protochlamydia amoebophila (strain UWE25)).